The primary structure comprises 126 residues: C-type natriuretic peptide (126 aa).

A signal peptide spans 1–23; it reads MHLSQLLACALLLTLLSLRPSEA. A disordered region spans residues 19-72; the sequence is RPSEAKPGAPPKVPRTPPGEEVAEPQAAGGGQKKGDKTPGGGGANLKGDRSRLL. A propeptide spanning residues 24 to 73 is cleaved from the precursor; that stretch reads KPGAPPKVPRTPPGEEVAEPQAAGGGQKKGDKTPGGGGANLKGDRSRLLR. A compositionally biased stretch (pro residues) spans 26 to 35; that stretch reads GAPPKVPRTP. Positions 46–63 are enriched in gly residues; that stretch reads AGGGQKKGDKTPGGGGAN. Cys110 and Cys126 are oxidised to a cystine.

The protein belongs to the natriuretic peptide family. In terms of processing, degraded by IDE (in vitro).

It localises to the secreted. Hormone which plays a role in endochondral ossification through regulation of cartilaginous growth plate chondrocytes proliferation and differentiation. May also be vasoactive and natriuretic. Acts by specifically binding and stimulating NPR2 to produce cGMP. Binds the clearance receptor NPR3. The polypeptide is C-type natriuretic peptide (NPPC) (Sus scrofa (Pig)).